The sequence spans 263 residues: Uridylate kinase (263 aa).

29-32 (KVSG) is a binding site for ATP. Position 71 (G71) interacts with UMP. Residues G72 and R76 each contribute to the ATP site. UMP contacts are provided by residues D91 and 152-159 (TGNPFFTT). ATP is bound by residues T179, Q180, Y185, and D188.

The protein belongs to the UMP kinase family. As to quaternary structure, homohexamer.

The protein localises to the cytoplasm. It catalyses the reaction UMP + ATP = UDP + ADP. The protein operates within pyrimidine metabolism; CTP biosynthesis via de novo pathway; UDP from UMP (UMPK route): step 1/1. Its activity is regulated as follows. Inhibited by UTP. Its function is as follows. Catalyzes the reversible phosphorylation of UMP to UDP. The polypeptide is Uridylate kinase (Maricaulis maris (strain MCS10) (Caulobacter maris)).